We begin with the raw amino-acid sequence, 437 residues long: Ribosomal protein uS12 methylthiotransferase RimO (437 aa).

Residues 3–118 form the MTTase N-terminal domain; it reads KKFYITTLGC…AGKILREKFP (116 aa). Cysteine 12, cysteine 48, cysteine 81, cysteine 157, cysteine 161, and cysteine 164 together coordinate [4Fe-4S] cluster. One can recognise a Radical SAM core domain in the interval 143–370; the sequence is NYSKPYAYVK…RDSHLEILEE (228 aa). A TRAM domain is found at 373–437; it reads ESRIGRTYDA…YEYDMNGTWV (65 aa).

It belongs to the methylthiotransferase family. RimO subfamily. [4Fe-4S] cluster serves as cofactor.

It is found in the cytoplasm. It carries out the reaction L-aspartate(89)-[ribosomal protein uS12]-hydrogen + (sulfur carrier)-SH + AH2 + 2 S-adenosyl-L-methionine = 3-methylsulfanyl-L-aspartate(89)-[ribosomal protein uS12]-hydrogen + (sulfur carrier)-H + 5'-deoxyadenosine + L-methionine + A + S-adenosyl-L-homocysteine + 2 H(+). Functionally, catalyzes the methylthiolation of an aspartic acid residue of ribosomal protein uS12. The sequence is that of Ribosomal protein uS12 methylthiotransferase RimO from Leptospira interrogans serogroup Icterohaemorrhagiae serovar copenhageni (strain Fiocruz L1-130).